A 104-amino-acid chain; its full sequence is Circadian clock oscillator protein KaiB (104 aa).

The protein belongs to the KaiB family. In terms of assembly, the KaiABC complex composition changes during the circadian cycle to control KaiC phosphorylation. Complexes KaiC(6), KaiA(2-4):KaiC(6), KaiB(6):KaiC(6) and KaiC(6):KaiB(6):KaiA(12) are among the most important forms, many form cooperatively. Undergoes a major conformational rearrangment; in the free state forms homotetramers as a dimer of dimers. When bound to the CI domain of KaiC switches to a monomeric thioredoxin-fold (KaiB(fs)). KaiB(fs) binds CikA, leading it to dephosphorylate phospho-RpaA.

Its function is as follows. Key component of the KaiABC oscillator complex, which constitutes the main circadian regulator in cyanobacteria. Complex composition changes during the circadian cycle to control KaiC phosphorylation. KaiA stimulates KaiC autophosphorylation, while KaiB sequesters KaiA, leading to KaiC autodephosphorylation. Phospho-Ser-431 KaiC accumulation triggers binding of KaiB to form the KaiB(6):KaiC(6) complex, leading to changes in output regulators CikA and SasA. KaiB switches to a thioredoxin-like fold (KaiB(fs)) when bound to KaiC. KaiB(6):KaiC(6) formation exposes a site for KaiA binding that sequesters KaiA from KaiC, making the KaiC(6):KaiB(6):KaiA(12) complex that results in KaiC autodephosphorylation. A metamorphic protein which reversibly switches between an inactive tetrameric fold and a rare, thioredoxin-like monomeric fold (KaiB(fs)). KaiB(fs) binds phospho-KaiC, KaiA and CikA. KaiA and CikA compete for binding to KaiB(fs), and KaiB(fs) and SasA compete for binding to KaiC, thus the clock oscillator and output signal pathway are tightly coupled. This chain is Circadian clock oscillator protein KaiB, found in Nostoc punctiforme (strain ATCC 29133 / PCC 73102).